A 403-amino-acid chain; its full sequence is CCA-adding enzyme (403 aa).

Residues Gly-32 and Arg-35 each contribute to the ATP site. CTP contacts are provided by Gly-32 and Arg-35. Mg(2+) contacts are provided by Asp-45 and Asp-47. Residues Arg-116, Asp-159, Arg-162, Arg-165, and Arg-168 each coordinate ATP. CTP contacts are provided by Arg-116, Asp-159, Arg-162, Arg-165, and Arg-168.

It belongs to the tRNA nucleotidyltransferase/poly(A) polymerase family. Bacterial CCA-adding enzyme type 3 subfamily. As to quaternary structure, homodimer. Mg(2+) serves as cofactor.

The enzyme catalyses a tRNA precursor + 2 CTP + ATP = a tRNA with a 3' CCA end + 3 diphosphate. The catalysed reaction is a tRNA with a 3' CCA end + 2 CTP + ATP = a tRNA with a 3' CCACCA end + 3 diphosphate. Catalyzes the addition and repair of the essential 3'-terminal CCA sequence in tRNAs without using a nucleic acid template. Adds these three nucleotides in the order of C, C, and A to the tRNA nucleotide-73, using CTP and ATP as substrates and producing inorganic pyrophosphate. tRNA 3'-terminal CCA addition is required both for tRNA processing and repair. Also involved in tRNA surveillance by mediating tandem CCA addition to generate a CCACCA at the 3' terminus of unstable tRNAs. While stable tRNAs receive only 3'-terminal CCA, unstable tRNAs are marked with CCACCA and rapidly degraded. The chain is CCA-adding enzyme from Streptococcus suis (strain 98HAH33).